The sequence spans 241 residues: DNA repair protein RecO (241 aa).

The protein belongs to the RecO family.

In terms of biological role, involved in DNA repair and RecF pathway recombination. The sequence is that of DNA repair protein RecO from Yersinia enterocolitica serotype O:8 / biotype 1B (strain NCTC 13174 / 8081).